Here is a 286-residue protein sequence, read N- to C-terminus: Phosphatidylserine decarboxylase proenzyme (286 aa).

Catalysis depends on charge relay system; for autoendoproteolytic cleavage activity residues Asp-89, His-146, and Ser-252. Ser-252 serves as the catalytic Schiff-base intermediate with substrate; via pyruvic acid; for decarboxylase activity. A Pyruvic acid (Ser); by autocatalysis modification is found at Ser-252.

It belongs to the phosphatidylserine decarboxylase family. PSD-B subfamily. Prokaryotic type I sub-subfamily. In terms of assembly, heterodimer of a large membrane-associated beta subunit and a small pyruvoyl-containing alpha subunit. The cofactor is pyruvate. In terms of processing, is synthesized initially as an inactive proenzyme. Formation of the active enzyme involves a self-maturation process in which the active site pyruvoyl group is generated from an internal serine residue via an autocatalytic post-translational modification. Two non-identical subunits are generated from the proenzyme in this reaction, and the pyruvate is formed at the N-terminus of the alpha chain, which is derived from the carboxyl end of the proenzyme. The autoendoproteolytic cleavage occurs by a canonical serine protease mechanism, in which the side chain hydroxyl group of the serine supplies its oxygen atom to form the C-terminus of the beta chain, while the remainder of the serine residue undergoes an oxidative deamination to produce ammonia and the pyruvoyl prosthetic group on the alpha chain. During this reaction, the Ser that is part of the protease active site of the proenzyme becomes the pyruvoyl prosthetic group, which constitutes an essential element of the active site of the mature decarboxylase.

It is found in the cell membrane. It carries out the reaction a 1,2-diacyl-sn-glycero-3-phospho-L-serine + H(+) = a 1,2-diacyl-sn-glycero-3-phosphoethanolamine + CO2. It participates in phospholipid metabolism; phosphatidylethanolamine biosynthesis; phosphatidylethanolamine from CDP-diacylglycerol: step 2/2. In terms of biological role, catalyzes the formation of phosphatidylethanolamine (PtdEtn) from phosphatidylserine (PtdSer). In Shewanella loihica (strain ATCC BAA-1088 / PV-4), this protein is Phosphatidylserine decarboxylase proenzyme.